A 103-amino-acid polypeptide reads, in one-letter code: MAKNEKIRIRLKSYDHKLLDFSAGKIVETAKKAGSQVSGPVPLPTEKQVVTILRAVHKYKYSREQFEIRTHKRLIDIANPTPKTVDSLMRLDLPAGVDIEIKL.

It belongs to the universal ribosomal protein uS10 family. In terms of assembly, part of the 30S ribosomal subunit.

Involved in the binding of tRNA to the ribosomes. This chain is Small ribosomal subunit protein uS10, found in Clostridioides difficile (strain 630) (Peptoclostridium difficile).